The following is a 308-amino-acid chain: Sulfate adenylyltransferase subunit 2 (308 aa).

This sequence belongs to the PAPS reductase family. CysD subfamily. In terms of assembly, heterodimer composed of CysD, the smaller subunit, and CysN.

The enzyme catalyses sulfate + ATP + H(+) = adenosine 5'-phosphosulfate + diphosphate. It functions in the pathway sulfur metabolism; hydrogen sulfide biosynthesis; sulfite from sulfate: step 1/3. Its function is as follows. With CysN forms the ATP sulfurylase (ATPS) that catalyzes the adenylation of sulfate producing adenosine 5'-phosphosulfate (APS) and diphosphate, the first enzymatic step in sulfur assimilation pathway. APS synthesis involves the formation of a high-energy phosphoric-sulfuric acid anhydride bond driven by GTP hydrolysis by CysN coupled to ATP hydrolysis by CysD. This Chromobacterium violaceum (strain ATCC 12472 / DSM 30191 / JCM 1249 / CCUG 213 / NBRC 12614 / NCIMB 9131 / NCTC 9757 / MK) protein is Sulfate adenylyltransferase subunit 2.